Reading from the N-terminus, the 331-residue chain is Ferrochelatase (331 aa).

Positions 187 and 286 each coordinate Fe cation.

The protein belongs to the ferrochelatase family.

The protein resides in the cytoplasm. The enzyme catalyses heme b + 2 H(+) = protoporphyrin IX + Fe(2+). It participates in porphyrin-containing compound metabolism; protoheme biosynthesis; protoheme from protoporphyrin-IX: step 1/1. Its function is as follows. Catalyzes the ferrous insertion into protoporphyrin IX. This is Ferrochelatase from Legionella pneumophila (strain Paris).